We begin with the raw amino-acid sequence, 246 residues long: Tyrosine recombinase XerD-like (246 aa).

Positions 1 to 72 (MINDINNFIE…AVNQFLFFLY (72 aa)) constitute a Core-binding (CB) domain. One can recognise a Tyr recombinase domain in the interval 84–246 (QETEKITLAQ…TPITLERYYR (163 aa)). Catalysis depends on residues K149 and R212. Y244 serves as the catalytic O-(3'-phospho-DNA)-tyrosine intermediate.

The protein belongs to the 'phage' integrase family. XerD-like subfamily.

Its subcellular location is the cytoplasm. Its function is as follows. Putative tyrosine recombinase. Not involved in the cutting and rejoining of the recombining DNA molecules on dif(SL) site. This is Tyrosine recombinase XerD-like from Streptococcus agalactiae serotype V (strain ATCC BAA-611 / 2603 V/R).